We begin with the raw amino-acid sequence, 577 residues long: Putative pseudouridine synthase B0024.11 (577 aa).

Residue Asp188 is the Nucleophile of the active site. One can recognise a TRUD domain in the interval 265–472 (GFINYFGTQR…GESSRCLFVE (208 aa)). A compositionally biased stretch (basic and acidic residues) spans 538-565 (KAMRDASFKTRGDDEKTEENVLEEKGSD). A disordered region spans residues 538–577 (KAMRDASFKTRGDDEKTEENVLEEKGSDDANELNLVSEDQ).

Belongs to the pseudouridine synthase TruD family.

It carries out the reaction a uridine in tRNA = a pseudouridine in tRNA. This chain is Putative pseudouridine synthase B0024.11, found in Caenorhabditis elegans.